Reading from the N-terminus, the 465-residue chain is MISNGIGTVTAGKRSICLLPLLLIGLWGCVTCHRSPVEDVCTAKPRDIPVNPMCIYRSSEKKATEGQGSEQKIPGATNRRVWELSKANSHFATAFYQHLADSKNNNDNIFLSPLSISTAFAMTKLGACNNTLKQLMEVFKFDTISEKTSDQIHFFFAKLNCRLYRKANKSSELVSANRLFGGKSITFNETYQDISEVVYGAKLQPLDFKGNAEQSRLTINQWISNKTEGRITDVIPPQAINEFTVLVLVNTIYFKGLWKSKFSPENTRKELFYKADGESCSVLMMYQESKFRYRRVAESTQVLELPFKGDDITMVLILPKLEKTLAKVEQELTPDMLQEWLDELTETLLVVHMPRFRIEDSFSVKEQLQDMGLEDLFSPEKSRLPGIVAEGRSDLYVSDAFHKAFLEVNEEGSEAAASTVISIAGRSLNSDRVTFKANRPILVLIREVALNTIIFMGRVANPCVD.

The first 32 residues, 1–32 (MISNGIGTVTAGKRSICLLPLLLIGLWGCVTC), serve as a signal peptide directing secretion. Intrachain disulfides connect cysteine 41-cysteine 161 and cysteine 54-cysteine 128. The residue at position 64 (threonine 64) is a Phosphothreonine. Serine 69 is modified (phosphoserine). Position 82 (tryptophan 82) interacts with heparin. Residue asparagine 129 is glycosylated (N-linked (GlcNAc...) asparagine). Arginine 162 serves as a coordination point for heparin. Residue asparagine 168 is glycosylated (N-linked (GlcNAc...) asparagine). Arginine 178 contacts heparin. Asparagine 188 and asparagine 225 each carry an N-linked (GlcNAc...) asparagine glycan. A disulfide bridge links cysteine 280 with cysteine 463.

Belongs to the serpin family. Forms protease inhibiting heterodimer with TMPRSS7. In terms of processing, phosphorylated by FAM20C in the extracellular medium. As to expression, plasma.

It localises to the secreted. The protein localises to the extracellular space. Its function is as follows. Most important serine protease inhibitor in plasma that regulates the blood coagulation cascade. AT-III inhibits thrombin, matriptase-3/TMPRSS7, as well as factors IXa, Xa and XIa. Its inhibitory activity is greatly enhanced in the presence of heparin. The chain is Antithrombin-III (SERPINC1) from Bos taurus (Bovine).